A 321-amino-acid chain; its full sequence is Probable pectate lyase A (321 aa).

The N-terminal stretch at 1-20 (MANFKLFLALAACLSGQALA) is a signal peptide. Asn-93 carries an N-linked (GlcNAc...) asparagine glycan. Asp-134, Asp-163, and Asp-167 together coordinate Ca(2+). The active site involves Arg-220.

The protein belongs to the polysaccharide lyase 1 family. Requires Ca(2+) as cofactor.

The protein localises to the secreted. It carries out the reaction Eliminative cleavage of (1-&gt;4)-alpha-D-galacturonan to give oligosaccharides with 4-deoxy-alpha-D-galact-4-enuronosyl groups at their non-reducing ends.. Functionally, pectinolytic enzyme consist of four classes of enzymes: pectin lyase, polygalacturonase, pectin methylesterase and rhamnogalacturonase. Among pectinolytic enzymes, pectin lyase is the most important in depolymerization of pectin, since it cleaves internal glycosidic bonds of highly methylated pectins. Favors pectate, the anion, over pectin, the methyl ester. The sequence is that of Probable pectate lyase A (plyA) from Aspergillus flavus (strain ATCC 200026 / FGSC A1120 / IAM 13836 / NRRL 3357 / JCM 12722 / SRRC 167).